A 50-amino-acid polypeptide reads, in one-letter code: Photosystem II reaction center protein M (50 aa).

Residues 7–27 (GFVASLLFVGVPTIFLIGLFI) form a helical membrane-spanning segment.

It belongs to the PsbM family. As to quaternary structure, PSII is composed of 1 copy each of membrane proteins PsbA, PsbB, PsbC, PsbD, PsbE, PsbF, PsbH, PsbI, PsbJ, PsbK, PsbL, PsbM, PsbT, PsbX, PsbY, Psb30/Ycf12, peripheral proteins PsbO, CyanoQ (PsbQ), PsbU, PsbV and a large number of cofactors. It forms dimeric complexes.

The protein localises to the cellular thylakoid membrane. Its function is as follows. One of the components of the core complex of photosystem II (PSII). PSII is a light-driven water:plastoquinone oxidoreductase that uses light energy to abstract electrons from H(2)O, generating O(2) and a proton gradient subsequently used for ATP formation. It consists of a core antenna complex that captures photons, and an electron transfer chain that converts photonic excitation into a charge separation. This subunit is found at the monomer-monomer interface. In Prochlorococcus marinus (strain MIT 9301), this protein is Photosystem II reaction center protein M.